The following is a 248-amino-acid chain: AA9 family lytic polysaccharide monooxygenase G (248 aa).

Residues 1–21 (MLPNAAGLLVAGVVSLSGVAA) form the signal peptide. Cu(2+) is bound at residue histidine 22. N-linked (GlcNAc...) asparagine glycosylation is present at asparagine 58. A disulfide bridge connects residues cysteine 77 and cysteine 195. Histidine 107 provides a ligand contact to Cu(2+). Glutamine 190 provides a ligand contact to O2. Tyrosine 192 provides a ligand contact to Cu(2+). Asparagine 203 carries N-linked (GlcNAc...) asparagine glycosylation.

This sequence belongs to the polysaccharide monooxygenase AA9 family. The cofactor is Cu(2+).

It is found in the secreted. It carries out the reaction [(1-&gt;4)-beta-D-glucosyl]n+m + reduced acceptor + O2 = 4-dehydro-beta-D-glucosyl-[(1-&gt;4)-beta-D-glucosyl]n-1 + [(1-&gt;4)-beta-D-glucosyl]m + acceptor + H2O.. Its function is as follows. Lytic polysaccharide monooxygenase (LPMO) that depolymerizes crystalline and amorphous polysaccharides via the oxidation of scissile alpha- or beta-(1-4)-glycosidic bonds, yielding C1 or C4 oxidation products. Catalysis by LPMOs requires the reduction of the active-site copper from Cu(II) to Cu(I) by a reducing agent and H(2)O(2) or O(2) as a cosubstrate. The chain is AA9 family lytic polysaccharide monooxygenase G from Malbranchea cinnamomea (Thermophilic fungus).